Here is a 132-residue protein sequence, read N- to C-terminus: Small ribosomal subunit protein uS8c (132 aa).

It belongs to the universal ribosomal protein uS8 family. In terms of assembly, part of the 30S ribosomal subunit.

The protein localises to the plastid. It localises to the chloroplast. One of the primary rRNA binding proteins, it binds directly to 16S rRNA central domain where it helps coordinate assembly of the platform of the 30S subunit. The protein is Small ribosomal subunit protein uS8c (rps8) of Nymphaea alba (White water-lily).